Reading from the N-terminus, the 645-residue chain is Beta-galactosidase (645 aa).

Residue arginine 102 coordinates substrate. Cysteine 106 provides a ligand contact to Zn(2+). Asparagine 140 contributes to the substrate binding site. Glutamate 141 (proton donor) is an active-site residue. Zn(2+) contacts are provided by cysteine 150, cysteine 152, and cysteine 155. Glutamate 312 (nucleophile) is an active-site residue. Substrate is bound by residues tryptophan 320 and 360 to 363; that span reads EQMH.

Belongs to the glycosyl hydrolase 42 family. Homotrimer.

The catalysed reaction is Hydrolysis of terminal non-reducing beta-D-galactose residues in beta-D-galactosides.. Inhibited by Cu(2+) and Fe(2+), and moderately activated by divalent cations such as Co(2+), Mn(2+) and Zn(2+). Considerably activated by dithiothreitol, beta-mercaptoethanol and cysteine. The protein is Beta-galactosidase of Thermus thermophilus.